The sequence spans 304 residues: UDP-N-acetylenolpyruvoylglucosamine reductase (304 aa).

One can recognise an FAD-binding PCMH-type domain in the interval 34–198 (IGGKADFLVW…LEVVFALRPG (165 aa)). The active site involves R177. The active-site Proton donor is the S227. The active site involves E297.

It belongs to the MurB family. Requires FAD as cofactor.

It localises to the cytoplasm. It catalyses the reaction UDP-N-acetyl-alpha-D-muramate + NADP(+) = UDP-N-acetyl-3-O-(1-carboxyvinyl)-alpha-D-glucosamine + NADPH + H(+). It functions in the pathway cell wall biogenesis; peptidoglycan biosynthesis. Cell wall formation. The sequence is that of UDP-N-acetylenolpyruvoylglucosamine reductase from Geobacillus kaustophilus (strain HTA426).